Reading from the N-terminus, the 259-residue chain is Phosphatidylglycerol--prolipoprotein diacylglyceryl transferase (259 aa).

4 consecutive transmembrane segments (helical) span residues 12–32 (LSLHWYAVCILVGLLLAVYLA), 46–66 (IIDFILIAFPLAIIGARIYYV), 83–103 (IWNGGIAIYGGLITGTIVLFV), and 109–129 (VLNPIHFLDIAAPSVMLAQAI). Position 131 (R131) interacts with a 1,2-diacyl-sn-glycero-3-phospho-(1'-sn-glycerol). 3 helical membrane-spanning segments follow: residues 167-187 (VPTFLYESMWNLIGFVIIMVW), 194-214 (LLDGDIISFYLIWYGCGRLVI), and 226-246 (GIRVSQYVSVLLIIIAIVFIF).

The protein belongs to the Lgt family.

It localises to the cell membrane. The catalysed reaction is L-cysteinyl-[prolipoprotein] + a 1,2-diacyl-sn-glycero-3-phospho-(1'-sn-glycerol) = an S-1,2-diacyl-sn-glyceryl-L-cysteinyl-[prolipoprotein] + sn-glycerol 1-phosphate + H(+). It functions in the pathway protein modification; lipoprotein biosynthesis (diacylglyceryl transfer). Its function is as follows. Catalyzes the transfer of the diacylglyceryl group from phosphatidylglycerol to the sulfhydryl group of the N-terminal cysteine of a prolipoprotein, the first step in the formation of mature lipoproteins. This chain is Phosphatidylglycerol--prolipoprotein diacylglyceryl transferase, found in Streptococcus equi subsp. zooepidemicus (strain H70).